A 330-amino-acid polypeptide reads, in one-letter code: Aspartate--ammonia ligase (330 aa).

It belongs to the class-II aminoacyl-tRNA synthetase family. AsnA subfamily.

The protein localises to the cytoplasm. The catalysed reaction is L-aspartate + NH4(+) + ATP = L-asparagine + AMP + diphosphate + H(+). It participates in amino-acid biosynthesis; L-asparagine biosynthesis; L-asparagine from L-aspartate (ammonia route): step 1/1. The polypeptide is Aspartate--ammonia ligase (Escherichia fergusonii (strain ATCC 35469 / DSM 13698 / CCUG 18766 / IAM 14443 / JCM 21226 / LMG 7866 / NBRC 102419 / NCTC 12128 / CDC 0568-73)).